The following is a 298-amino-acid chain: Bifunctional protein FolD (298 aa).

Residues 165-167, S190, and I231 each bind NADP(+); that span reads GRS.

It belongs to the tetrahydrofolate dehydrogenase/cyclohydrolase family. As to quaternary structure, homodimer.

The catalysed reaction is (6R)-5,10-methylene-5,6,7,8-tetrahydrofolate + NADP(+) = (6R)-5,10-methenyltetrahydrofolate + NADPH. It carries out the reaction (6R)-5,10-methenyltetrahydrofolate + H2O = (6R)-10-formyltetrahydrofolate + H(+). The protein operates within one-carbon metabolism; tetrahydrofolate interconversion. Its function is as follows. Catalyzes the oxidation of 5,10-methylenetetrahydrofolate to 5,10-methenyltetrahydrofolate and then the hydrolysis of 5,10-methenyltetrahydrofolate to 10-formyltetrahydrofolate. This Prochlorococcus marinus (strain AS9601) protein is Bifunctional protein FolD.